Reading from the N-terminus, the 208-residue chain is Thymidylate kinase (208 aa).

10–17 (GPEGSGKT) contributes to the ATP binding site.

This sequence belongs to the thymidylate kinase family.

The enzyme catalyses dTMP + ATP = dTDP + ADP. Functionally, phosphorylation of dTMP to form dTDP in both de novo and salvage pathways of dTTP synthesis. In Bacillus cereus (strain B4264), this protein is Thymidylate kinase.